The following is a 432-amino-acid chain: Meiotically up-regulated gene 134 protein (432 aa).

The protein belongs to the UPF0300 family.

The protein localises to the cytoplasm. Its subcellular location is the cell cortex. Its function is as follows. Has a role in meiosis. This chain is Meiotically up-regulated gene 134 protein (mug134), found in Schizosaccharomyces pombe (strain 972 / ATCC 24843) (Fission yeast).